A 141-amino-acid polypeptide reads, in one-letter code: VLSAADKNNVKGIFGKISSHAEDYGAEALERMFITYPSTKTYFPHFDLSHGSAQVKGHGKKVVAALIEAANHIDDIAGTLSKLSDLHAHKLRVDPVNFKLLGQCFLVVVAIHHPSALTPEVHASLDKFLCAVGNVLTAKYR.

In terms of domain architecture, Globin spans 1–141 (VLSAADKNNV…VGNVLTAKYR (141 aa)). Histidine 58 provides a ligand contact to O2. Histidine 87 contacts heme b.

Belongs to the globin family. As to quaternary structure, heterotetramer of two alpha chains and two beta chains. As to expression, red blood cells.

In terms of biological role, involved in oxygen transport from the lung to the various peripheral tissues. This is Hemoglobin subunit alpha-A (HBAA) from Francolinus pondicerianus (Grey francolin).